We begin with the raw amino-acid sequence, 390 residues long: Flap endonuclease 1-1 (390 aa).

The tract at residues Met1–Lys108 is N-domain. Residue Asp34 coordinates Mg(2+). DNA is bound at residue Arg74. Residues Asp90, Glu162, Glu164, Asp183, and Asp185 each contribute to the Mg(2+) site. The interval Gln126–Phe254 is I-domain. Glu162 contacts DNA. Residues Gly232 and Asp234 each coordinate DNA. Residue Asp234 participates in Mg(2+) binding. Residues Phe348–Phe356 are interaction with PCNA. A disordered region spans residues Thr359 to Ile390.

Belongs to the XPG/RAD2 endonuclease family. FEN1 subfamily. In terms of assembly, interacts with PCNA. Three molecules of FEN1 bind to one PCNA trimer with each molecule binding to one PCNA monomer. PCNA stimulates the nuclease activity without altering cleavage specificity. The cofactor is Mg(2+). In terms of processing, phosphorylated. Phosphorylation upon DNA damage induces relocalization to the nuclear plasma.

Its subcellular location is the nucleus. It is found in the nucleolus. It localises to the nucleoplasm. The protein localises to the mitochondrion. In terms of biological role, structure-specific nuclease with 5'-flap endonuclease and 5'-3' exonuclease activities involved in DNA replication and repair. During DNA replication, cleaves the 5'-overhanging flap structure that is generated by displacement synthesis when DNA polymerase encounters the 5'-end of a downstream Okazaki fragment. It enters the flap from the 5'-end and then tracks to cleave the flap base, leaving a nick for ligation. Also involved in the long patch base excision repair (LP-BER) pathway, by cleaving within the apurinic/apyrimidinic (AP) site-terminated flap. Acts as a genome stabilization factor that prevents flaps from equilibrating into structures that lead to duplications and deletions. Also possesses 5'-3' exonuclease activity on nicked or gapped double-stranded DNA, and exhibits RNase H activity. Also involved in replication and repair of rDNA and in repairing mitochondrial DNA. This chain is Flap endonuclease 1-1, found in Paramecium tetraurelia.